The sequence spans 166 residues: MSKAIENKQVQVQEITEKFQNASSVVVVDYRGLNVAQVTELRKQLREAGVEFKVYKNTLTRRAAEAAGLEGINDVLVGPNAIAFSNEDVVAPAKIINEFAKKNEALEIKAGIIEGTISSVEDVKALAELPSREGLLSMLLSVLQAPVRNFALATKAVADQKEEQGA.

Belongs to the universal ribosomal protein uL10 family. In terms of assembly, part of the ribosomal stalk of the 50S ribosomal subunit. The N-terminus interacts with L11 and the large rRNA to form the base of the stalk. The C-terminus forms an elongated spine to which L12 dimers bind in a sequential fashion forming a multimeric L10(L12)X complex.

Functionally, forms part of the ribosomal stalk, playing a central role in the interaction of the ribosome with GTP-bound translation factors. This chain is Large ribosomal subunit protein uL10, found in Lysinibacillus sphaericus (strain C3-41).